The primary structure comprises 365 residues: Ubiquitin carboxyl-terminal hydrolase 4 (365 aa).

G2 carries N-myristoyl glycine lipidation. Residues 23-362 (FGFENFGNTC…HGYILLYESL (340 aa)) enclose the USP domain. The Nucleophile role is filled by C32. Positions 81-98 (KKKTGVIAPKRFVQRLKK) match the Bipartite nuclear localization signal motif. H310 functions as the Proton acceptor in the catalytic mechanism.

The protein belongs to the peptidase C19 family. In terms of tissue distribution, constitutively and ubiquitously expressed.

The protein resides in the nucleus. It catalyses the reaction Thiol-dependent hydrolysis of ester, thioester, amide, peptide and isopeptide bonds formed by the C-terminal Gly of ubiquitin (a 76-residue protein attached to proteins as an intracellular targeting signal).. In terms of biological role, recognizes and hydrolyzes the peptide bond at the C-terminal Gly of ubiquitin. Involved in the processing of poly-ubiquitin precursors as well as that of ubiquitinated proteins. Required for the correct development of pollen. This Arabidopsis thaliana (Mouse-ear cress) protein is Ubiquitin carboxyl-terminal hydrolase 4 (UBP4).